Consider the following 314-residue polypeptide: Deoxymugineic acid synthase 1 (314 aa).

D44 contributes to the NADP(+) binding site. The active-site Proton donor is the Y49. H112 is a binding site for substrate. Residues 158-159, Q180, 258-266, and 273-281 each bind NADP(+); these read CN, FDEGRMKEN, and ELSEEERQR.

It belongs to the aldo/keto reductase family.

The enzyme catalyses 2'-deoxymugineate + NAD(+) = 3''-deamino-3''-oxonicotianamine + NADH + H(+). The catalysed reaction is 2'-deoxymugineate + NADP(+) = 3''-deamino-3''-oxonicotianamine + NADPH + H(+). It participates in siderophore biosynthesis. Its function is as follows. Catalyzes the reduction of a 3''-keto intermediate during the biosynthesis of 2'-deoxymugineic acid (DMA) from L-Met. Involved in the formation of phytosiderophores (MAs) belonging to the mugineic acid family and required to acquire iron. In Zea mays (Maize), this protein is Deoxymugineic acid synthase 1.